A 326-amino-acid chain; its full sequence is uncharacterized protein (326 aa).

The protein belongs to the transferase hexapeptide repeat family.

This is an uncharacterized protein from Escherichia coli (strain K12).